The primary structure comprises 427 residues: 3-phosphoshikimate 1-carboxyvinyltransferase (427 aa).

3-phosphoshikimate contacts are provided by K22, S23, and R27. Residue K22 coordinates phosphoenolpyruvate. G96 and R124 together coordinate phosphoenolpyruvate. 3-phosphoshikimate-binding residues include S169, S170, Q171, S197, D313, N336, and K340. Q171 provides a ligand contact to phosphoenolpyruvate. D313 acts as the Proton acceptor in catalysis. The phosphoenolpyruvate site is built by R344, R386, and K411.

The protein belongs to the EPSP synthase family. In terms of assembly, monomer.

It is found in the cytoplasm. The catalysed reaction is 3-phosphoshikimate + phosphoenolpyruvate = 5-O-(1-carboxyvinyl)-3-phosphoshikimate + phosphate. The protein operates within metabolic intermediate biosynthesis; chorismate biosynthesis; chorismate from D-erythrose 4-phosphate and phosphoenolpyruvate: step 6/7. In terms of biological role, catalyzes the transfer of the enolpyruvyl moiety of phosphoenolpyruvate (PEP) to the 5-hydroxyl of shikimate-3-phosphate (S3P) to produce enolpyruvyl shikimate-3-phosphate and inorganic phosphate. This Citrobacter koseri (strain ATCC BAA-895 / CDC 4225-83 / SGSC4696) protein is 3-phosphoshikimate 1-carboxyvinyltransferase.